Here is a 591-residue protein sequence, read N- to C-terminus: Isocitrate dehydrogenase kinase/phosphatase (591 aa).

ATP-binding positions include 322 to 328 (APGIRGL) and K343. Residue D378 is part of the active site.

It belongs to the AceK family.

The protein resides in the cytoplasm. The enzyme catalyses L-seryl-[isocitrate dehydrogenase] + ATP = O-phospho-L-seryl-[isocitrate dehydrogenase] + ADP + H(+). In terms of biological role, bifunctional enzyme which can phosphorylate or dephosphorylate isocitrate dehydrogenase (IDH) on a specific serine residue. This is a regulatory mechanism which enables bacteria to bypass the Krebs cycle via the glyoxylate shunt in response to the source of carbon. When bacteria are grown on glucose, IDH is fully active and unphosphorylated, but when grown on acetate or ethanol, the activity of IDH declines drastically concomitant with its phosphorylation. In Aromatoleum aromaticum (strain DSM 19018 / LMG 30748 / EbN1) (Azoarcus sp. (strain EbN1)), this protein is Isocitrate dehydrogenase kinase/phosphatase.